A 629-amino-acid chain; its full sequence is tRNA uridine 5-carboxymethylaminomethyl modification enzyme MnmG (629 aa).

13-18 (GGGHAG) serves as a coordination point for FAD. Residue 273–287 (GPRYCPSIEDKIVRF) coordinates NAD(+).

Belongs to the MnmG family. In terms of assembly, homodimer. Heterotetramer of two MnmE and two MnmG subunits. FAD is required as a cofactor.

The protein localises to the cytoplasm. In terms of biological role, NAD-binding protein involved in the addition of a carboxymethylaminomethyl (cmnm) group at the wobble position (U34) of certain tRNAs, forming tRNA-cmnm(5)s(2)U34. In Pseudoalteromonas translucida (strain TAC 125), this protein is tRNA uridine 5-carboxymethylaminomethyl modification enzyme MnmG.